We begin with the raw amino-acid sequence, 238 residues long: uncharacterized protein (238 aa).

This is an uncharacterized protein from Escherichia coli (strain K12).